The sequence spans 245 residues: Ubiquinone/menaquinone biosynthesis C-methyltransferase UbiE (245 aa).

S-adenosyl-L-methionine contacts are provided by residues threonine 71, aspartate 92, and 118–119; that span reads DA.

It belongs to the class I-like SAM-binding methyltransferase superfamily. MenG/UbiE family.

The catalysed reaction is a 2-demethylmenaquinol + S-adenosyl-L-methionine = a menaquinol + S-adenosyl-L-homocysteine + H(+). The enzyme catalyses a 2-methoxy-6-(all-trans-polyprenyl)benzene-1,4-diol + S-adenosyl-L-methionine = a 5-methoxy-2-methyl-3-(all-trans-polyprenyl)benzene-1,4-diol + S-adenosyl-L-homocysteine + H(+). Its pathway is quinol/quinone metabolism; menaquinone biosynthesis; menaquinol from 1,4-dihydroxy-2-naphthoate: step 2/2. It functions in the pathway cofactor biosynthesis; ubiquinone biosynthesis. In terms of biological role, methyltransferase required for the conversion of demethylmenaquinol (DMKH2) to menaquinol (MKH2) and the conversion of 2-polyprenyl-6-methoxy-1,4-benzoquinol (DDMQH2) to 2-polyprenyl-3-methyl-6-methoxy-1,4-benzoquinol (DMQH2). This Neisseria meningitidis serogroup C (strain 053442) protein is Ubiquinone/menaquinone biosynthesis C-methyltransferase UbiE.